Reading from the N-terminus, the 146-residue chain is MKIYVDADACPVKDVIIFEATKAEIPVTLVTSFSHYSNAEQPKGVETIYVDSGADAADYRIMQLAQKEDLIVTQDYGLASLALAKGCIVLHHKGYKYTNENIDQLLQTRYLSAMVRKSGKRTKGPKPFTAEDKEKFRALFKSMIPL.

This sequence belongs to the UPF0178 family.

This chain is UPF0178 protein BT9727_2823, found in Bacillus thuringiensis subsp. konkukian (strain 97-27).